The following is a 352-amino-acid chain: Cyclin-dependent kinase-like 1 (352 aa).

The Protein kinase domain occupies 4–287 (YEKIGKIGEG…CEQLLQHPYF (284 aa)). ATP-binding positions include 10–18 (IGEGSYGVV) and Lys33. The [NKR]KIAxRE signature appears at 45 to 51 (KKIALRE). The active-site Proton acceptor is the Asp126.

It belongs to the protein kinase superfamily. CMGC Ser/Thr protein kinase family. CDC2/CDKX subfamily.

Its subcellular location is the cytoplasm. The protein localises to the nucleus. It carries out the reaction L-seryl-[protein] + ATP = O-phospho-L-seryl-[protein] + ADP + H(+). It catalyses the reaction L-threonyl-[protein] + ATP = O-phospho-L-threonyl-[protein] + ADP + H(+). In Rattus norvegicus (Rat), this protein is Cyclin-dependent kinase-like 1.